A 266-amino-acid chain; its full sequence is Norfluorocurarine synthase 1 (266 aa).

Positions 11 to 121 constitute an AB hydrolase-1 domain; it reads HFVLVHGAGH…VMPDAVHPPS (111 aa). Active-site residues include S86, D216, and H244.

The protein belongs to the AB hydrolase superfamily. As to quaternary structure, homodimer. As to expression, mainly expressed in roots.

It carries out the reaction 17-dehydropreakuammicine + H2O = norfluorocurarine + methanol + CO2. It participates in alkaloid biosynthesis. Its function is as follows. Hydrolase involved in the biosynthesis of curare monoterpene indole alkaloids (MIAs), natural products such as strychnine, a neurotoxic compound used as a pesticide to control rodents, and its pharmacologically active derivatives, including brucine, used to regulate blood pressure. Curare alkaloids act as animal glycine receptor antagonists. Catalyzes the conversion of dehydropreakuammicine to norfluorocurarine. This is Norfluorocurarine synthase 1 from Strychnos nux-vomica (Poison nut).